Consider the following 277-residue polypeptide: Small ribosomal subunit protein uS5 (277 aa).

Residues 18-40 form a disordered region; it reads AAGRPSWSWQRPGERARTPGRKA. The span at 29 to 40 shows a compositional bias: basic and acidic residues; that stretch reads PGERARTPGRKA. The S5 DRBM domain occupies 87-150; it reads LKDEVLKIMP…ILAKLSIIPV (64 aa).

Belongs to the universal ribosomal protein uS5 family. Component of the small ribosomal subunit.

It is found in the cytoplasm. Its subcellular location is the nucleus. It localises to the nucleolus. Functionally, component of the ribosome, a large ribonucleoprotein complex responsible for the synthesis of proteins in the cell. The small ribosomal subunit (SSU) binds messenger RNAs (mRNAs) and translates the encoded message by selecting cognate aminoacyl-transfer RNA (tRNA) molecules. The large subunit (LSU) contains the ribosomal catalytic site termed the peptidyl transferase center (PTC), which catalyzes the formation of peptide bonds, thereby polymerizing the amino acids delivered by tRNAs into a polypeptide chain. The nascent polypeptides leave the ribosome through a tunnel in the LSU and interact with protein factors that function in enzymatic processing, targeting, and the membrane insertion of nascent chains at the exit of the ribosomal tunnel. Plays a role in the assembly and function of the 40S ribosomal subunit. Mutations in this protein affects the control of translational fidelity. Involved in nucleolar processing of pre-18S ribosomal RNA and ribosome assembly. The protein is Small ribosomal subunit protein uS5 (rps2) of Ictalurus punctatus (Channel catfish).